The chain runs to 299 residues: Cathepsin B-like CP3 (299 aa).

The first 19 residues, 1-19 (MKLFLLAAAAFSAPALTVS), serve as a signal peptide directing secretion. Intrachain disulfides connect Cys-87–Cys-114, Cys-97–Cys-140, and Cys-133–Cys-176. The active site involves Cys-100. Active-site residues include His-244 and Asn-265.

Belongs to the peptidase C1 family.

The protein localises to the vacuole. Functionally, thiol protease which is required for parasite excystation and invasion of the proximal small intestine of the human host. This Giardia intestinalis (Giardia lamblia) protein is Cathepsin B-like CP3 (CP3).